The following is a 94-amino-acid chain: DNA-binding protein HU (94 aa).

Residues 55 to 94 (RAERPGRNPKTGEPIMIAASNNPSFKPGKALKDAVKSSAG) form a disordered region. The span at 84–94 (ALKDAVKSSAG) shows a compositional bias: basic and acidic residues.

The protein belongs to the bacterial histone-like protein family.

Histone-like DNA-binding protein which is capable of wrapping DNA to stabilize it, and thus to prevent its denaturation under extreme environmental conditions. The sequence is that of DNA-binding protein HU (hup) from Xylella fastidiosa (strain Temecula1 / ATCC 700964).